The chain runs to 438 residues: Xylose isomerase (438 aa).

Catalysis depends on residues H103 and D106. Mg(2+) contacts are provided by E234, E270, H273, D298, D309, D311, and D341.

This sequence belongs to the xylose isomerase family. As to quaternary structure, homotetramer. Mg(2+) is required as a cofactor.

The protein resides in the cytoplasm. It carries out the reaction alpha-D-xylose = alpha-D-xylulofuranose. The sequence is that of Xylose isomerase from Phocaeicola vulgatus (strain ATCC 8482 / DSM 1447 / JCM 5826 / CCUG 4940 / NBRC 14291 / NCTC 11154) (Bacteroides vulgatus).